A 330-amino-acid chain; its full sequence is Methionyl-tRNA formyltransferase (330 aa).

A (6S)-5,6,7,8-tetrahydrofolate-binding site is contributed by 112 to 115 (SLLP).

It belongs to the Fmt family.

The catalysed reaction is L-methionyl-tRNA(fMet) + (6R)-10-formyltetrahydrofolate = N-formyl-L-methionyl-tRNA(fMet) + (6S)-5,6,7,8-tetrahydrofolate + H(+). In terms of biological role, attaches a formyl group to the free amino group of methionyl-tRNA(fMet). The formyl group appears to play a dual role in the initiator identity of N-formylmethionyl-tRNA by promoting its recognition by IF2 and preventing the misappropriation of this tRNA by the elongation apparatus. The chain is Methionyl-tRNA formyltransferase from Synechococcus sp. (strain RCC307).